A 453-amino-acid chain; its full sequence is Alpha-2B adrenergic receptor (453 aa).

Residues 1–17 (MSGPTMDHQEPYSVQAT) lie on the Extracellular side of the membrane. Residues 18–42 (AAIASAITFLILFTIFGNALVILAV) form a helical membrane-spanning segment. Over 43 to 54 (LTSRSLRAPQNL) the chain is Cytoplasmic. Residues 55–80 (FLVSLAAADILVATLIIPFSLANELL) traverse the membrane as a helical segment. The Extracellular portion of the chain corresponds to 81–90 (GYWYFWRAWC). C90 and C169 form a disulfide bridge. Residues 91-113 (EVYLALDVLFCTSSIVHLCAISL) traverse the membrane as a helical segment. Residues 114 to 135 (DRYWAVSRALEYNSKRTPRRIK) lie on the Cytoplasmic side of the membrane. A helical transmembrane segment spans residues 136-158 (CIILTVWLIAAVISLPPLIYKGD). At 159 to 174 (QRPEPRGLPQCELNQE) the chain is on the extracellular side. The helical transmembrane segment at 175–198 (AWYILASSIGSFFAPCLIMILVYL) threads the bilayer. Over 199 to 375 (RIYVIAKRSH…LSREKRFTFV (177 aa)) the chain is Cytoplasmic. Residues 213 to 331 (GAKRGSGEGE…PASVCNPPLQ (119 aa)) form a disordered region. Positions 287–297 (GQGQKKGTSGA) are enriched in polar residues. Residues 300–314 (EEGDEEDEEEVEECE) show a composition bias toward acidic residues. Residues 376-399 (LAVVIGVFVVCWFPFFFSYSLGAI) form a helical membrane-spanning segment. Over 400 to 408 (CPQHCKVPH) the chain is Extracellular. Residues 409–432 (GLFQFFFWIGYCNSSLNPVIYTVF) traverse the membrane as a helical segment. The Cytoplasmic segment spans residues 433-453 (NQDFRRAFRRILCRPWTQTGW). C445 carries S-palmitoyl cysteine lipidation.

Belongs to the G-protein coupled receptor 1 family. Adrenergic receptor subfamily. ADRA2B sub-subfamily. In terms of assembly, interacts with RAB26. Interacts with PPP1R9B. Interacts with GGA1, GGA2 and GGA3.

It is found in the cell membrane. Alpha-2 adrenergic receptors mediate the catecholamine-induced inhibition of adenylate cyclase through the action of G proteins. The polypeptide is Alpha-2B adrenergic receptor (Adra2b) (Rattus norvegicus (Rat)).